The sequence spans 150 residues: C-type lectin 37Db (150 aa).

An N-terminal signal peptide occupies residues 1–20 (MMVKLLLLFLVCWSALPLES). In terms of domain architecture, C-type lectin spans 31-148 (IGEKQYYISL…CYSSVAFICQ (118 aa)). Disulfide bonds link C52/C147 and C122/C139. Residues N107 and N115 are each glycosylated (N-linked (GlcNAc...) asparagine).

Its subcellular location is the secreted. In terms of biological role, galactose-specific lectin that displays calcium-dependent activity. Binds to the surface of hemocytes and enhances hemocyte encapsulation and melanization. This is likely by interacting with carbohydrates on the surface of the hemocytes. Also displays agglutination activity against the Gram-negative bacterium E.coli. This is C-type lectin 37Db from Drosophila melanogaster (Fruit fly).